The chain runs to 95 residues: MSLSAAEVNKIAWLARLAIDDDKVEAYARDLSQILGFVEQLGSVDTSRVAPMAHPLDEAQRLRPDDVTETDQRALFQAHAPLVEAGLYLVPKVIE.

It belongs to the GatC family. Heterotrimer of A, B and C subunits.

It catalyses the reaction L-glutamyl-tRNA(Gln) + L-glutamine + ATP + H2O = L-glutaminyl-tRNA(Gln) + L-glutamate + ADP + phosphate + H(+). The catalysed reaction is L-aspartyl-tRNA(Asn) + L-glutamine + ATP + H2O = L-asparaginyl-tRNA(Asn) + L-glutamate + ADP + phosphate + 2 H(+). Its function is as follows. Allows the formation of correctly charged Asn-tRNA(Asn) or Gln-tRNA(Gln) through the transamidation of misacylated Asp-tRNA(Asn) or Glu-tRNA(Gln) in organisms which lack either or both of asparaginyl-tRNA or glutaminyl-tRNA synthetases. The reaction takes place in the presence of glutamine and ATP through an activated phospho-Asp-tRNA(Asn) or phospho-Glu-tRNA(Gln). The chain is Aspartyl/glutamyl-tRNA(Asn/Gln) amidotransferase subunit C from Methylococcus capsulatus (strain ATCC 33009 / NCIMB 11132 / Bath).